Consider the following 638-residue polypeptide: Bromodomain-containing factor 2 (638 aa).

Residues 1-10 (MSRTNMDTRH) are compositionally biased toward basic and acidic residues. Residues 1 to 54 (MSRTNMDTRHAHSALLAAPQSATANSRSSNSSSESSSNKNNINVGVGDDSGNVS) are disordered. Over residues 25–43 (NSRSSNSSSESSSNKNNIN) the composition is skewed to low complexity. Residues 130–239 (EAEELPPHQS…KYFEKKLSAM (110 aa)) form the Bromo 1 domain. The disordered stretch occupies residues 250–306 (KKTSRNRKKNEDMDSPLVIRRSVSTTNDNIGESGNREGVSGGRPKRTIHPPKSKDLF). Phosphoserine is present on S264. Over residues 271–281 (SVSTTNDNIGE) the composition is skewed to polar residues. Residues 317 to 426 (KTLQKKFRTC…ELFNFHWLEN (110 aa)) enclose the Bromo 2 domain. The tract at residues 435–460 (TDSDLEEDNYSSSYSSDDEYDDEDIN) is disordered. A compositionally biased stretch (acidic residues) spans 450 to 460 (SDDEYDDEDIN). Positions 468 to 537 (AIQYLEQKLK…INELSDLEMN (70 aa)) form a coiled coil. Residues 506–590 (TLLRRKAMKH…EKKNNNNSKR (85 aa)) form the NET domain. The interval 586–638 (NNSKRKLSGNYSTAPTNKKKKTLKFLEKDEIINNNNYSDSEEDSSDSSDSDSD) is disordered. Residues 624-638 (DSEEDSSDSSDSDSD) show a composition bias toward acidic residues.

The protein belongs to the BET family. In terms of assembly, interacts with the TFIID subunit TAF7 and with histone H4. In terms of processing, phosphorylated by the casein kinase CK2 complex.

The protein resides in the cytoplasm. Its subcellular location is the nucleus. Its function is as follows. Transcription factor involved in the expression of a broad class of genes including snRNAs. Required for sporulation and DNA-damage repair. Prevents the spreading of SIR silencing at telomeres and protects histone H4, but not H3, from deacetylation. The sequence is that of Bromodomain-containing factor 2 (BDF2) from Saccharomyces cerevisiae (strain ATCC 204508 / S288c) (Baker's yeast).